The sequence spans 52 residues: Eukaryotic translation initiation factor 2 subunit 1 (52 aa).

One can recognise an S1 motif domain in the interval 16–52 (EDVVMVNVRSIAEMGAYVSLLEYNNIEGRILLSELSR). At S48 the chain carries Phosphoserine; by HRI. Phosphoserine is present on S51.

The protein belongs to the eIF-2-alpha family. Eukaryotic translation initiation factor 2 eIF2 is a heterotrimeric complex composed of an alpha (EIF2S1), a beta (EIF2S2) and a gamma (EIF2S3) chain. eIF2 is member of the 43S pre-initiation complex (43S PIC). eIF2 forms a complex with at least CELF1/CUGBP1, CALR, CALR3, EIF2S1, EIF2S2, HSP90B1 and HSPA5. Interaction with METAP2 protects EIF2S1 from inhibitory phosphorylation. Interacts with ABCF1. Associates with ribosomes. Interacts with DDX3X in an RNA-independent manner. Phosphorylation at Ser-48 and Ser-51 stabilizes the eIF-2/GDP/eIF2B complex and prevents GDP/GTP exchange reaction, thus impairing the recycling of eIF-2 between successive rounds of initiation and leading to global inhibition of translation, while concomitantly initiating the preferential translation of integrated stress response (ISR)-specific mRNAs. Substrate for at least 4 kinases: EIF2AK1/HRI, EIF2AK2/PKR, EIF2AK3/PERK and EIF2AK4/GCN2. Phosphorylation on Ser-51 by the EIF2AK4/GCN2 protein kinase occurs in response to amino acid starvation and UV irradiation. Phosphorylation at Ser-51 by the EIF2AK3/PERK protein kinase occurs in response to the unfolded protein response. Phosphorylation at Ser-51 by EIF2AK1/HRI in response to mitochondrial damage promotes relocalization to the mitochondrial surface.

The protein resides in the cytoplasm. The protein localises to the stress granule. It localises to the cytosol. It is found in the mitochondrion. With respect to regulation, activity is regulated by phosphorylation at Ser-49 and Ser-52, which stabilizes the eIF2/GDP/eIF2B complex and prevents the eIF2B-mediated exchange of GDP for GTP, thereby preventing the formation of the 43S pre-initiation complex (43S PIC). This results in the global attenuation of 5' cap-dependent protein synthesis and concomitant translation of ISR-specific mRNAs that contain a short upstream open reading frame (uORF) in their 5' UTR, such as ATF4, ATF5, DDIT3/CHOP and PPP1R15A/GADD34. Its function is as follows. Member of the eIF2 complex that functions in the early steps of protein synthesis by forming a ternary complex with GTP and initiator tRNA. This complex binds to a 40S ribosomal subunit, followed by mRNA binding to form a 43S pre-initiation complex. Junction of the 60S ribosomal subunit to form the 80S initiation complex is preceded by hydrolysis of the GTP bound to eIF2 and release of an eIF2-GDP binary complex. In order for eIF2 to recycle and catalyze another round of initiation, the GDP bound to eIF2 must exchange with GTP by way of a reaction catalyzed by eIF2B. EIF2S1/eIF2-alpha is a key component of the integrated stress response (ISR), required for adaptation to various stress: phosphorylation by metabolic-stress sensing protein kinases (EIF2AK1/HRI, EIF2AK2/PKR, EIF2AK3/PERK and EIF2AK4/GCN2) in response to stress converts EIF2S1/eIF2-alpha in a global protein synthesis inhibitor, leading to a attenuation of cap-dependent translation, while concomitantly initiating the preferential translation of ISR-specific mRNAs, such as the transcriptional activators ATF4 and QRICH1, and hence allowing ATF4- and QRICH1-mediated reprogramming. EIF2S1/eIF2-alpha also acts as an activator of mitophagy in response to mitochondrial damage: phosphorylation by EIF2AK1/HRI promotes relocalization to the mitochondrial surface, thereby triggering PRKN-independent mitophagy. The sequence is that of Eukaryotic translation initiation factor 2 subunit 1 (EIF2S1) from Oryctolagus cuniculus (Rabbit).